The chain runs to 89 residues: cAMP-regulated phosphoprotein 21 (89 aa).

Residues 1–89 (MSEQGDLNQA…GGESLQDQTL (89 aa)) form a disordered region. An N-acetylserine modification is found at S2. Residues 9 to 25 (QAIAEEGGTEQETATPE) are compositionally biased toward low complexity. A Phosphoserine modification is found at S33. The segment covering 40 to 53 (LELQRRLEAQNQER) has biased composition (basic and acidic residues). S56 carries the phosphoserine modification.

As to quaternary structure, interacts with CALM1. Phosphorylation at Ser-56 favors interaction with CALM1.

The protein resides in the cytoplasm. May act as a competitive inhibitor of calmodulin-dependent enzymes such as calcineurin in neurons. In Pongo abelii (Sumatran orangutan), this protein is cAMP-regulated phosphoprotein 21 (ARPP21).